Reading from the N-terminus, the 122-residue chain is UPF0102 protein CA_C1763 (122 aa).

Belongs to the UPF0102 family.

In Clostridium acetobutylicum (strain ATCC 824 / DSM 792 / JCM 1419 / IAM 19013 / LMG 5710 / NBRC 13948 / NRRL B-527 / VKM B-1787 / 2291 / W), this protein is UPF0102 protein CA_C1763.